Here is a 196-residue protein sequence, read N- to C-terminus: SPRY domain-containing protein 7 (196 aa).

N-acetylalanine is present on Ala2. In terms of domain architecture, B30.2/SPRY spans 2–184 (AASVFCCLRC…FSEFYHTPPP (183 aa)).

The sequence is that of SPRY domain-containing protein 7 (SPRYD7) from Bos taurus (Bovine).